We begin with the raw amino-acid sequence, 761 residues long: Ribonucleoside-diphosphate reductase subunit alpha (761 aa).

The ATP-cone domain occupies 5–95; it reads LFVTKRDGRK…IFHLRKKAYG (91 aa). ATP is bound by residues K9, 15–21, T55, and K91; that span reads EKINLDK. A GDP-binding site is contributed by T209. A disulfide bond links C225 and C462. DTTP-binding positions include 232-234, R262, and R269; that span reads DSL. N437 lines the GDP pocket. The active-site Proton acceptor is the N437. C439 serves as the catalytic Cysteine radical intermediate. GDP-binding positions include E441 and 623 to 625; that span reads ETS. E441 serves as the catalytic Proton acceptor.

This sequence belongs to the ribonucleoside diphosphate reductase large chain family. In terms of assembly, tetramer of two alpha and two beta subunits.

The enzyme catalyses a 2'-deoxyribonucleoside 5'-diphosphate + [thioredoxin]-disulfide + H2O = a ribonucleoside 5'-diphosphate + [thioredoxin]-dithiol. Under complex allosteric control mediated by deoxynucleoside triphosphates and ATP binding to separate specificity and activation sites on the alpha subunit. The type of nucleotide bound at the specificity site determines substrate preference. It seems probable that ATP makes the enzyme reduce CDP and UDP, dGTP favors ADP reduction and dTTP favors GDP reduction. Stimulated by ATP and inhibited by dATP binding to the activity site. Provides the precursors necessary for DNA synthesis. Catalyzes the biosynthesis of deoxyribonucleotides from the corresponding ribonucleotides. This Buchnera aphidicola subsp. Acyrthosiphon pisum (strain APS) (Acyrthosiphon pisum symbiotic bacterium) protein is Ribonucleoside-diphosphate reductase subunit alpha (nrdA).